The chain runs to 243 residues: TIGR03089 family protein (243 aa).

This sequence belongs to the TIGR03089 family.

The polypeptide is TIGR03089 family protein (Mycobacterium tuberculosis (strain ATCC 25618 / H37Rv)).